Here is a 176-residue protein sequence, read N- to C-terminus: Flavodoxin (176 aa).

The 169-residue stretch at 4-172 folds into the Flavodoxin-like domain; the sequence is IGIFFGTDTG…RLASWLEEIK (169 aa).

This sequence belongs to the flavodoxin family. FMN serves as cofactor.

Its function is as follows. Low-potential electron donor to a number of redox enzymes. NifF is the electron donor to nitrogenase. The protein is Flavodoxin (nifF) of Klebsiella pneumoniae.